Here is a 236-residue protein sequence, read N- to C-terminus: Dual specificity protein phosphatase 15 (236 aa).

G2 carries the N-myristoyl glycine lipid modification. The Tyrosine-protein phosphatase domain maps to 4–144 (GMTKVLPGLY…LEEFGWANSQ (141 aa)). C88 serves as the catalytic Phosphocysteine intermediate. The segment at 178–213 (GPGTSAPSATTASSAASEGTLQRLVPRSPRESHRPL) is disordered. A compositionally biased stretch (low complexity) spans 181–194 (TSAPSATTASSAAS).

This sequence belongs to the protein-tyrosine phosphatase family. Non-receptor class dual specificity subfamily.

The protein resides in the cell membrane. It carries out the reaction O-phospho-L-tyrosyl-[protein] + H2O = L-tyrosyl-[protein] + phosphate. The catalysed reaction is O-phospho-L-seryl-[protein] + H2O = L-seryl-[protein] + phosphate. It catalyses the reaction O-phospho-L-threonyl-[protein] + H2O = L-threonyl-[protein] + phosphate. May play a role in the regulation of oligodendrocyte differentiation. May play a role in the regulation of myelin formation. Involved in the regulation of Erk1/2 phosphorylation in Schwann cells; the signaling may be linked to the regulation of myelination. May dephosphorylate MAPK13, ATF2, ERBB3, PDGFRB and SNX6. This is Dual specificity protein phosphatase 15 (Dusp15) from Rattus norvegicus (Rat).